We begin with the raw amino-acid sequence, 316 residues long: MDPALLDDVIRRLLEVKNLKPGKNAQLSESEIKQLCAAAKEIFLQQPNLLELEAPIKICGDVHGQYSDLLRLFDYGGYPPQANYLFLGDYVDRGKQSLETICLLLAYKVKYPENFFLLRGNHECASVNRIYGFYDECKRRFSVKLWKTFTDCFNCLPVSALIDEKILCMHGGLSPELNKLEQILNLNRPTDVPDTGLLCDLLWSDPSNEATGWAINDRGVSFTFGPDKVSEFLEKHDLDLICRAHQVVEDGYEFFASRQLVTIFSAPNYCGEFDNAGAMMSVDDTLMCSFQILKPARKMMGGSTNNKSGFKSFRGW.

Residues D61, H63, D89, and N121 each contribute to the Mn(2+) site. The active-site Proton donor is H122. Residues H170 and H245 each coordinate Mn(2+).

This sequence belongs to the PPP phosphatase family. PP-1 subfamily. The cofactor is Mn(2+).

It carries out the reaction O-phospho-L-seryl-[protein] + H2O = L-seryl-[protein] + phosphate. It catalyses the reaction O-phospho-L-threonyl-[protein] + H2O = L-threonyl-[protein] + phosphate. This chain is Serine/threonine-protein phosphatase PP1 (PP1), found in Zea mays (Maize).